A 201-amino-acid polypeptide reads, in one-letter code: Glycerol-3-phosphate acyltransferase (201 aa).

A run of 5 helical transmembrane segments spans residues 5–25, 55–75, 88–108, 118–138, and 164–184; these read LLGA…FGVV, KMGV…ILVA, WVTA…WLGF, LGIF…GYAV, and TYGP…LIFL.

The protein belongs to the PlsY family. Probably interacts with PlsX.

It is found in the cell inner membrane. The catalysed reaction is an acyl phosphate + sn-glycerol 3-phosphate = a 1-acyl-sn-glycero-3-phosphate + phosphate. It functions in the pathway lipid metabolism; phospholipid metabolism. Catalyzes the transfer of an acyl group from acyl-phosphate (acyl-PO(4)) to glycerol-3-phosphate (G3P) to form lysophosphatidic acid (LPA). This enzyme utilizes acyl-phosphate as fatty acyl donor, but not acyl-CoA or acyl-ACP. The polypeptide is Glycerol-3-phosphate acyltransferase (Anaeromyxobacter sp. (strain K)).